The primary structure comprises 426 residues: Cytochrome c biogenesis protein Ccs1 (426 aa).

A run of 3 helical transmembrane segments spans residues 11–31 (LKFAIALLLLISITITFGSII), 70–90 (NFWFISLLLSLGISLIACTFF), and 153–173 (IAPVFVHLSIILILLGSIFAS).

This sequence belongs to the Ccs1/CcsB family. In terms of assembly, may interact with CcsA.

The protein localises to the plastid. It localises to the chloroplast thylakoid membrane. Required during biogenesis of c-type cytochromes (cytochrome c6 and cytochrome f) at the step of heme attachment. This Heterosigma akashiwo (strain CCMP452 / OLISTH) protein is Cytochrome c biogenesis protein Ccs1.